A 362-amino-acid polypeptide reads, in one-letter code: Heat-inducible transcription repressor HrcA (362 aa).

The protein belongs to the HrcA family.

Its function is as follows. Negative regulator of class I heat shock genes (grpE-dnaK-dnaJ and groELS operons). Prevents heat-shock induction of these operons. This chain is Heat-inducible transcription repressor HrcA, found in Bradyrhizobium diazoefficiens (strain JCM 10833 / BCRC 13528 / IAM 13628 / NBRC 14792 / USDA 110).